A 393-amino-acid chain; its full sequence is Riboflavin biosynthesis protein RibBA (393 aa).

The interval M1 to K200 is DHBP synthase. Residues R27 to E28, D32, R139 to T143, and E163 each bind D-ribulose 5-phosphate. E28 serves as a coordination point for Mg(2+). Mg(2+) is bound at residue H142. A GTP cyclohydrolase II region spans residues L201–I393. R249–A253 is a binding site for GTP. The Zn(2+) site is built by C254, C265, and C267. GTP is bound by residues Q270, E291–R293, and T313. The Proton acceptor; for GTP cyclohydrolase activity role is filled by D325. The active-site Nucleophile; for GTP cyclohydrolase activity is R327. GTP is bound by residues S348 and K353.

The protein in the N-terminal section; belongs to the DHBP synthase family. In the C-terminal section; belongs to the GTP cyclohydrolase II family. Requires Mg(2+) as cofactor. The cofactor is Mn(2+). It depends on Zn(2+) as a cofactor.

It catalyses the reaction D-ribulose 5-phosphate = (2S)-2-hydroxy-3-oxobutyl phosphate + formate + H(+). It carries out the reaction GTP + 4 H2O = 2,5-diamino-6-hydroxy-4-(5-phosphoribosylamino)-pyrimidine + formate + 2 phosphate + 3 H(+). It functions in the pathway cofactor biosynthesis; riboflavin biosynthesis; 2-hydroxy-3-oxobutyl phosphate from D-ribulose 5-phosphate: step 1/1. Its pathway is cofactor biosynthesis; riboflavin biosynthesis; 5-amino-6-(D-ribitylamino)uracil from GTP: step 1/4. Catalyzes the conversion of D-ribulose 5-phosphate to formate and 3,4-dihydroxy-2-butanone 4-phosphate. Functionally, catalyzes the conversion of GTP to 2,5-diamino-6-ribosylamino-4(3H)-pyrimidinone 5'-phosphate (DARP), formate and pyrophosphate. In Staphylococcus aureus (strain COL), this protein is Riboflavin biosynthesis protein RibBA.